The primary structure comprises 397 residues: Proteasome-activating nucleotidase (397 aa).

Positions 15–58 form a coiled coil; that stretch reads DYVTFLKRRIRQLELQVRTLEADKERLERELSRLRMEMSRLRQP. ATP contacts are provided by residues 182 to 187 and H321; that span reads GCGKTL. The segment at 395 to 397 is docks into pockets in the proteasome alpha-ring to cause gate opening; sequence MYG.

The protein belongs to the AAA ATPase family. In terms of assembly, homohexamer. The hexameric complex has a two-ring architecture resembling a top hat that caps the 20S proteasome core at one or both ends. Upon ATP-binding, the C-terminus of PAN interacts with the alpha-rings of the proteasome core by binding to the intersubunit pockets.

It is found in the cytoplasm. Its function is as follows. ATPase which is responsible for recognizing, binding, unfolding and translocation of substrate proteins into the archaeal 20S proteasome core particle. Is essential for opening the gate of the 20S proteasome via an interaction with its C-terminus, thereby allowing substrate entry and access to the site of proteolysis. Thus, the C-termini of the proteasomal ATPase function like a 'key in a lock' to induce gate opening and therefore regulate proteolysis. Unfolding activity requires energy from ATP hydrolysis, whereas ATP binding alone promotes ATPase-20S proteasome association which triggers gate opening, and supports translocation of unfolded substrates. This Thermococcus kodakarensis (strain ATCC BAA-918 / JCM 12380 / KOD1) (Pyrococcus kodakaraensis (strain KOD1)) protein is Proteasome-activating nucleotidase.